A 151-amino-acid polypeptide reads, in one-letter code: MVWLGVDLGNARVGLALSDPELTFAHPAGNIHVAGDYFFAIDEVLNVIEDEHVDHVIVGLPLQMDGTEGKSAKKARRWAANLEKRLQAESEDSDSTEYQIPQVSLIDERLTTVSAHRQLFEAHKASNKHRPVVDQQSAVVILQTALDRTRE.

The protein belongs to the YqgF nuclease family.

It is found in the cytoplasm. Functionally, could be a nuclease involved in processing of the 5'-end of pre-16S rRNA. The protein is Putative pre-16S rRNA nuclease of Bifidobacterium longum subsp. infantis (strain ATCC 15697 / DSM 20088 / JCM 1222 / NCTC 11817 / S12).